The primary structure comprises 125 residues: Large ribosomal subunit protein bL12 (125 aa).

Belongs to the bacterial ribosomal protein bL12 family. In terms of assembly, homodimer. Part of the ribosomal stalk of the 50S ribosomal subunit. Forms a multimeric L10(L12)X complex, where L10 forms an elongated spine to which 2 to 4 L12 dimers bind in a sequential fashion. Binds GTP-bound translation factors.

Its function is as follows. Forms part of the ribosomal stalk which helps the ribosome interact with GTP-bound translation factors. Is thus essential for accurate translation. This is Large ribosomal subunit protein bL12 from Helicobacter acinonychis (strain Sheeba).